Consider the following 357-residue polypeptide: Uroporphyrinogen decarboxylase (357 aa).

Substrate-binding positions include 30-34 (RQAGR), Asp-79, Tyr-154, Ser-209, and His-336.

This sequence belongs to the uroporphyrinogen decarboxylase family. Homodimer.

It is found in the cytoplasm. The catalysed reaction is uroporphyrinogen III + 4 H(+) = coproporphyrinogen III + 4 CO2. The protein operates within porphyrin-containing compound metabolism; protoporphyrin-IX biosynthesis; coproporphyrinogen-III from 5-aminolevulinate: step 4/4. Its function is as follows. Catalyzes the decarboxylation of four acetate groups of uroporphyrinogen-III to yield coproporphyrinogen-III. This chain is Uroporphyrinogen decarboxylase, found in Mycobacterium leprae (strain Br4923).